The chain runs to 734 residues: Photosystem I P700 chlorophyll a apoprotein A2 (734 aa).

Transmembrane regions (helical) follow at residues 46–69 (IFAS…FHVA), 135–158 (LYRG…LHLQ), 175–199 (LNHH…HVAI), 273–291 (IAHH…GHMY), 330–353 (LHFQ…QHMY), 369–395 (AALY…IFFI), 417–439 (AIIS…LYVH), and 517–535 (FLVH…LILV). 2 residues coordinate [4Fe-4S] cluster: C559 and C568. The next 2 membrane-spanning stretches (helical) occupy residues 575–596 (AFYL…YWHW) and 643–665 (LSVW…MFLI). The chlorophyll a site is built by H654, M662, and Y670. W671 is a phylloquinone binding site. The chain crosses the membrane as a helical span at residues 707-727 (LVGLSHFSVGYIFTYAAFLIA).

Belongs to the PsaA/PsaB family. As to quaternary structure, the PsaA/B heterodimer binds the P700 chlorophyll special pair and subsequent electron acceptors. PSI consists of a core antenna complex that captures photons, and an electron transfer chain that converts photonic excitation into a charge separation. The eukaryotic PSI reaction center is composed of at least 11 subunits. P700 is a chlorophyll a/chlorophyll a' dimer, A0 is one or more chlorophyll a, A1 is one or both phylloquinones and FX is a shared 4Fe-4S iron-sulfur center. is required as a cofactor.

The protein localises to the plastid. It localises to the chloroplast thylakoid membrane. It carries out the reaction reduced [plastocyanin] + hnu + oxidized [2Fe-2S]-[ferredoxin] = oxidized [plastocyanin] + reduced [2Fe-2S]-[ferredoxin]. PsaA and PsaB bind P700, the primary electron donor of photosystem I (PSI), as well as the electron acceptors A0, A1 and FX. PSI is a plastocyanin-ferredoxin oxidoreductase, converting photonic excitation into a charge separation, which transfers an electron from the donor P700 chlorophyll pair to the spectroscopically characterized acceptors A0, A1, FX, FA and FB in turn. Oxidized P700 is reduced on the lumenal side of the thylakoid membrane by plastocyanin. The chain is Photosystem I P700 chlorophyll a apoprotein A2 from Chara vulgaris (Common stonewort).